We begin with the raw amino-acid sequence, 208 residues long: Guanylate kinase (208 aa).

Positions 3–181 (GSLFIITAAS…ALTELKAIIV (179 aa)) constitute a Guanylate kinase-like domain. 10–17 (AASGTGKT) contributes to the ATP binding site.

The protein belongs to the guanylate kinase family.

The protein resides in the cytoplasm. It carries out the reaction GMP + ATP = GDP + ADP. In terms of biological role, essential for recycling GMP and indirectly, cGMP. The protein is Guanylate kinase of Psychrobacter arcticus (strain DSM 17307 / VKM B-2377 / 273-4).